Consider the following 375-residue polypeptide: Queuine tRNA-ribosyltransferase (375 aa).

Residue Asp90 is the Proton acceptor of the active site. Substrate is bound by residues 90-94 (DSGGF), Asp144, Gln190, and Gly217. The segment at 248 to 254 (GIGTPHY) is RNA binding. Asp267 (nucleophile) is an active-site residue. Residues 272–276 (TRIAR) are RNA binding; important for wobble base 34 recognition. Zn(2+) is bound by residues Cys305, Cys307, Cys310, and His336.

This sequence belongs to the queuine tRNA-ribosyltransferase family. As to quaternary structure, homodimer. Within each dimer, one monomer is responsible for RNA recognition and catalysis, while the other monomer binds to the replacement base PreQ1. The cofactor is Zn(2+).

It carries out the reaction 7-aminomethyl-7-carbaguanine + guanosine(34) in tRNA = 7-aminomethyl-7-carbaguanosine(34) in tRNA + guanine. Its pathway is tRNA modification; tRNA-queuosine biosynthesis. Catalyzes the base-exchange of a guanine (G) residue with the queuine precursor 7-aminomethyl-7-deazaguanine (PreQ1) at position 34 (anticodon wobble position) in tRNAs with GU(N) anticodons (tRNA-Asp, -Asn, -His and -Tyr). Catalysis occurs through a double-displacement mechanism. The nucleophile active site attacks the C1' of nucleotide 34 to detach the guanine base from the RNA, forming a covalent enzyme-RNA intermediate. The proton acceptor active site deprotonates the incoming PreQ1, allowing a nucleophilic attack on the C1' of the ribose to form the product. After dissociation, two additional enzymatic reactions on the tRNA convert PreQ1 to queuine (Q), resulting in the hypermodified nucleoside queuosine (7-(((4,5-cis-dihydroxy-2-cyclopenten-1-yl)amino)methyl)-7-deazaguanosine). The polypeptide is Queuine tRNA-ribosyltransferase (Borrelia duttonii (strain Ly)).